The chain runs to 197 residues: Small ribosomal subunit protein uS4 (197 aa).

The 61-residue stretch at 87-147 folds into the S4 RNA-binding domain; it reads SRIDNVIFRL…ESKKNTQRMK (61 aa).

It belongs to the universal ribosomal protein uS4 family. As to quaternary structure, part of the 30S ribosomal subunit. Contacts protein S5. The interaction surface between S4 and S5 is involved in control of translational fidelity.

Functionally, one of the primary rRNA binding proteins, it binds directly to 16S rRNA where it nucleates assembly of the body of the 30S subunit. Its function is as follows. With S5 and S12 plays an important role in translational accuracy. The polypeptide is Small ribosomal subunit protein uS4 (Agathobacter rectalis (strain ATCC 33656 / DSM 3377 / JCM 17463 / KCTC 5835 / VPI 0990) (Eubacterium rectale)).